The chain runs to 160 residues: Nucleotide-binding protein CPS_1098 (160 aa).

It belongs to the YajQ family.

In terms of biological role, nucleotide-binding protein. In Colwellia psychrerythraea (strain 34H / ATCC BAA-681) (Vibrio psychroerythus), this protein is Nucleotide-binding protein CPS_1098.